The chain runs to 466 residues: Soluble pyridine nucleotide transhydrogenase (466 aa).

36 to 45 lines the FAD pocket; it reads ERYQNVGGGC.

This sequence belongs to the class-I pyridine nucleotide-disulfide oxidoreductase family. In terms of assembly, homooligomer; probable homooctamer. FAD serves as cofactor.

It is found in the cytoplasm. It carries out the reaction NAD(+) + NADPH = NADH + NADP(+). In terms of biological role, conversion of NADPH, generated by peripheral catabolic pathways, to NADH, which can enter the respiratory chain for energy generation. The protein is Soluble pyridine nucleotide transhydrogenase of Escherichia coli O157:H7.